The chain runs to 600 residues: Methionine--tRNA ligase (600 aa).

The 'HIGH' region motif lies at 12-22 (PYANGPRHIGH). The Zn(2+) site is built by Cys-144, Cys-147, Cys-157, and Cys-160. Residues 351 to 355 (KFSSS) carry the 'KMSKS' region motif. Residue Ser-354 coordinates ATP.

It belongs to the class-I aminoacyl-tRNA synthetase family. MetG type 1 subfamily. Monomer. Zn(2+) serves as cofactor.

It is found in the cytoplasm. It catalyses the reaction tRNA(Met) + L-methionine + ATP = L-methionyl-tRNA(Met) + AMP + diphosphate. Functionally, is required not only for elongation of protein synthesis but also for the initiation of all mRNA translation through initiator tRNA(fMet) aminoacylation. The sequence is that of Methionine--tRNA ligase from Chloroflexus aggregans (strain MD-66 / DSM 9485).